The following is a 1086-amino-acid chain: NAD(P) transhydrogenase, mitochondrial (1086 aa).

The N-terminal 43 residues, 1-43, are a transit peptide targeting the mitochondrion; sequence MANLLKTVVTGCSCPLLSNLGSCKGLRVKKDFLRTFYTHQELW. Residues 44 to 474 are Mitochondrial matrix-facing; sequence CKAPVKPGIP…TITPFRKTMS (431 aa). Residue lysine 70 is modified to N6-acetyllysine. An N6-succinyllysine modification is found at lysine 117. NAD(+) is bound at residue 182 to 184; that stretch reads RVT. Lysine 224 carries the N6-succinyllysine modification. NAD(+) contacts are provided by residues valine 237, 257–259, and glycine 287; that span reads DTR. Position 294 is an N6-succinyllysine (lysine 294). Residues glutamate 300 and leucine 319 each contribute to the NAD(+) site. At lysine 331 the chain carries N6-succinyllysine. An N6-acetyllysine modification is found at lysine 397. A run of 4 helical transmembrane segments spans residues 475–493, 501–521, 527–546, and 558–578; these read TASA…GIAA, MVTT…GVTP, LMSV…LALM, and GLAA…FLVT. Residues 579–595 lie on the Mitochondrial matrix side of the membrane; sequence QRMLDMFKRPTDPPEYN. Transmembrane regions (helical) follow at residues 596-616, 622-642, 646-666, 672-691, and 702-722; these read YLYL…LYSG, IMYL…STQG, LGNA…LGVL, LLAQ…LTIA, and LVAA…IAEY. Over 723–739 the chain is Cytoplasmic; the sequence is IIEYPHFATDAAANLTK. 5 helical membrane-spanning segments follow: residues 740 to 760, 778 to 797, 801 to 819, 833 to 853, and 857 to 879; these read IVAY…LIAY, HLLN…PFMV, FTTG…AVMG, VVIT…GFLL, and LLTI…MCVA. Residues 880–1086 are Mitochondrial matrix-facing; the sequence is MNRSLANVIL…QAKVRESYQK (207 aa). Residues tyrosine 933, 965–970, 1007–1011, 1026–1027, 1042–1049, and 1068–1069 each bind NADP(+); these read VAGRMP, GANDT, GM, KRSLGVGY, and DA. At lysine 1079 the chain carries N6-succinyllysine.

The protein in the N-terminal section; belongs to the AlaDH/PNT family. This sequence in the C-terminal section; belongs to the PNT beta subunit family. As to quaternary structure, homodimer. In terms of tissue distribution, widely expressed with expression most readily detectable in adrenal, heart, kidney, thyroid and adipose tissues.

Its subcellular location is the mitochondrion inner membrane. The enzyme catalyses NAD(+) + NADPH + H(+)(in) = NADH + NADP(+) + H(+)(out). Functionally, the transhydrogenation between NADH and NADP is coupled to respiration and ATP hydrolysis and functions as a proton pump across the membrane. May play a role in reactive oxygen species (ROS) detoxification in the adrenal gland. This Homo sapiens (Human) protein is NAD(P) transhydrogenase, mitochondrial (NNT).